The sequence spans 875 residues: Ectonucleotide pyrophosphatase/phosphodiesterase family member 3 (875 aa).

Topologically, residues 1 to 11 are cytoplasmic; it reads MDSRLALATEE. A helical; Signal-anchor for type II membrane protein transmembrane segment spans residues 12–30; sequence PIKKDSLKRYKILCAVLLA. The Extracellular portion of the chain corresponds to 31–875; it reads LLVIVSLGLG…TYLPTFETII (845 aa). 2 consecutive SMB domains span residues 51–94 and 95–139; these read HIGS…VKST and QIWT…GEVP. 10 disulfides stabilise this stretch: Cys-55–Cys-72, Cys-59–Cys-90, Cys-70–Cys-83, Cys-76–Cys-82, Cys-99–Cys-116, Cys-104–Cys-134, Cys-114–Cys-127, Cys-120–Cys-126, Cys-145–Cys-191, and Cys-153–Cys-365. A Cell attachment site motif is present at residues 79 to 81; it reads RGD. The interval 161 to 545 is phosphodiesterase; the sequence is PVILFSMDGF…HGSLNHLLKA (385 aa). Asp-168 contacts Zn(2+). Lys-205 contacts ATP. Position 206 (Thr-206) interacts with Zn(2+). Thr-206 serves as the catalytic Nucleophile. Asn-227 is an ATP binding site. Residue Asn-237 is glycosylated (N-linked (GlcNAc...) asparagine). Asp-276 lines the ATP pocket. Residues Asn-280 and Asn-289 are each glycosylated (N-linked (GlcNAc...) asparagine). An ATP-binding site is contributed by Tyr-290. Residues Asp-326, His-330, Asp-373, and His-374 each coordinate Zn(2+). Cystine bridges form between Cys-381/Cys-478, Cys-429/Cys-818, Cys-562/Cys-623, Cys-575/Cys-679, Cys-577/Cys-664, and Cys-787/Cys-797. Residue His-483 coordinates Zn(2+). Asn-533, Asn-574, Asn-594, and Asn-702 each carry an N-linked (GlcNAc...) asparagine glycan. Positions 582-875 are nuclease; that stretch reads TSGQEEQVNQ…TYLPTFETII (294 aa). Ca(2+) is bound by residues Asp-752, Asn-754, Asp-756, His-758, and Asp-760. The N-linked (GlcNAc...) asparagine glycan is linked to Asn-789.

It belongs to the nucleotide pyrophosphatase/phosphodiesterase family. As to quaternary structure, monomer and homodimer. Zn(2+) serves as cofactor. The N-terminal is blocked. Post-translationally, N-glycosylated. N-glycosylation is necessary for normal transport to the cell membrane, but is not the apical targeting signal. As to expression, detected in intestinal epithelium and liver (at protein level).

It localises to the cell membrane. It is found in the apical cell membrane. The protein resides in the secreted. It catalyses the reaction Hydrolytically removes 5'-nucleotides successively from the 3'-hydroxy termini of 3'-hydroxy-terminated oligonucleotides.. It carries out the reaction a ribonucleoside 5'-triphosphate + H2O = a ribonucleoside 5'-phosphate + diphosphate + H(+). The enzyme catalyses ATP + H2O = AMP + diphosphate + H(+). The catalysed reaction is CTP + H2O = CMP + diphosphate + H(+). It catalyses the reaction GTP + H2O = GMP + diphosphate + H(+). It carries out the reaction UTP + H2O = UMP + diphosphate + H(+). The enzyme catalyses UDP-N-acetyl-alpha-D-glucosamine + H2O = N-acetyl-alpha-D-glucosamine 1-phosphate + UMP + 2 H(+). The catalysed reaction is P(1),P(3)-bis(5'-adenosyl) triphosphate + H2O = AMP + ADP + 2 H(+). It catalyses the reaction P(1),P(4)-bis(5'-adenosyl) tetraphosphate + H2O = AMP + ATP + 2 H(+). It carries out the reaction P(1),P(5)-bis(5'-adenosyl) pentaphosphate + H2O = adenosine 5'-tetraphosphate + AMP + 2 H(+). The enzyme catalyses P(1),P(4)-bis(5'-guanosyl) tetraphosphate + H2O = GMP + GTP + 2 H(+). Hydrolase that metabolizes extracellular nucleotides, including ATP, GTP, UTP and CTP. Limits mast cells and basophils response during inflammation and during the chronic phases of allergic responses by eliminating extracellular ATP, a signaling molecule activating these cells in an autocrine manner. Metabolizes extracellular ATP in the lumen of the small intestine, and thereby prevents ATP-induced apoptosis of intestinal plasmacytoid dendritic cells. Has a broad specificity and can also hydrolyze UDP-GlcNAc into UMP and GlcNAc-1-phosphate and potentially several other intracellular nucleotide sugars, including UDP-GalNAc, CMP-NeuAc, GDP-Fuc, and UDP-GlcA. Thereby, could modulate glycan biosynthesis and protein glycosylation. Can hydrolyze extracellular dinucleoside polyphosphates, including the vasoactive adenosine polyphosphates as well. In addition, displays an alkaline phosphodiesterase activity in vitro. In Rattus norvegicus (Rat), this protein is Ectonucleotide pyrophosphatase/phosphodiesterase family member 3.